Reading from the N-terminus, the 168-residue chain is MVDEATKRTLAAIPLLKTRAGPRDKDQWVGRLKEELVSLIKYVENNKKQDNDWFRLESNKEGTRWFGKCWYVHNLLKYEFDVEFDIPVTYPGTAPEIALPELDGKTAKMYRGGKICLTDHFKPLWARNVPKFGIAHAMALGLGPWLAVEIPDLVEKGIIVHKEKTSSE.

Residue Cys-116 is the Glycyl thioester intermediate of the active site.

The protein belongs to the ubiquitin-conjugating enzyme family. UFC1 subfamily.

In terms of biological role, E2-like enzyme which forms an intermediate with UFM1 via a thioester linkage. This is Ubiquitin-fold modifier-conjugating enzyme 1 from Trichoplax adhaerens (Trichoplax reptans).